The chain runs to 454 residues: Epoxide hydrolase 1 (454 aa).

The helical transmembrane segment at 1–21 (MWLEILLASVLGFVIYWFVSK) threads the bilayer. Topologically, residues 22 to 454 (DKEETLLLGD…RKFMGLLEQQ (433 aa)) are cytoplasmic. Asp226 (nucleophile) is an active-site residue. Position 294 is a dimethylated arginine (Arg294). Catalysis depends on Tyr373, which acts as the Proton donor. His430 serves as the catalytic Proton acceptor.

It belongs to the peptidase S33 family.

Its subcellular location is the microsome membrane. The protein resides in the endoplasmic reticulum membrane. The enzyme catalyses cis-stilbene oxide + H2O = (1R,2R)-hydrobenzoin. It carries out the reaction 1-(4-methoxyphenyl)-N-methyl-N-[(3-methyloxetan-3-yl)methyl]methanamine + H2O = 2-{[(4-methoxybenzyl)(methyl)amino]methyl}-2-methylpropane-1,3-diol. It catalyses the reaction 8,9-epoxy-(5Z,11Z,14Z)-eicosatrienoate + H2O = 8,9-dihydroxy-(5Z,11Z,14Z)-eicosatrienoate. The catalysed reaction is 11,12-epoxy-(5Z,8Z,14Z)-eicosatrienoate + H2O = 11,12-dihydroxy-(5Z,8Z,14Z)-eicosatrienoate. The enzyme catalyses 2-(5Z,8Z,11Z,14Z-eicosatetraenoyl)-glycerol + H2O = glycerol + (5Z,8Z,11Z,14Z)-eicosatetraenoate + H(+). With respect to regulation, inhibited by 10-hydroxystearamide and methoxy-arachidonyl fluorophosphate. Functionally, biotransformation enzyme that catalyzes the hydrolysis of arene and aliphatic epoxides to less reactive and more water soluble dihydrodiols by the trans addition of water. May play a role in the metabolism of endogenous lipids such as epoxide-containing fatty acids. Metabolizes the abundant endocannabinoid 2-arachidonoylglycerol (2-AG) to free arachidonic acid (AA) and glycerol. Binds 20(S)-hydroxycholesterol (20(S)-OHC). This is Epoxide hydrolase 1 (EPHX1) from Sus scrofa (Pig).